Consider the following 90-residue polypeptide: Small ribosomal subunit protein bS20 (90 aa).

This sequence belongs to the bacterial ribosomal protein bS20 family.

Functionally, binds directly to 16S ribosomal RNA. This Mesomycoplasma hyopneumoniae (strain J / ATCC 25934 / NCTC 10110) (Mycoplasma hyopneumoniae) protein is Small ribosomal subunit protein bS20.